The sequence spans 176 residues: Ribosome maturation factor RimP (176 aa).

The segment at 143 to 176 (LKPQTAKKKGRQEETEDMTLELDAVSRAVPEAEI) is disordered.

The protein belongs to the RimP family.

It localises to the cytoplasm. Functionally, required for maturation of 30S ribosomal subunits. This Chlorobium luteolum (strain DSM 273 / BCRC 81028 / 2530) (Pelodictyon luteolum) protein is Ribosome maturation factor RimP.